A 641-amino-acid polypeptide reads, in one-letter code: 1-deoxy-D-xylulose-5-phosphate synthase (641 aa).

Thiamine diphosphate contacts are provided by residues His71 and 112–114; that span reads SHA. Residue Asp144 coordinates Mg(2+). Residues 145–146, Asn174, Tyr285, and Glu366 contribute to the thiamine diphosphate site; that span reads GA. Asn174 is a binding site for Mg(2+).

The protein belongs to the transketolase family. DXPS subfamily. In terms of assembly, homodimer. The cofactor is Mg(2+). Requires thiamine diphosphate as cofactor.

It catalyses the reaction D-glyceraldehyde 3-phosphate + pyruvate + H(+) = 1-deoxy-D-xylulose 5-phosphate + CO2. It functions in the pathway metabolic intermediate biosynthesis; 1-deoxy-D-xylulose 5-phosphate biosynthesis; 1-deoxy-D-xylulose 5-phosphate from D-glyceraldehyde 3-phosphate and pyruvate: step 1/1. Catalyzes the acyloin condensation reaction between C atoms 2 and 3 of pyruvate and glyceraldehyde 3-phosphate to yield 1-deoxy-D-xylulose-5-phosphate (DXP). The sequence is that of 1-deoxy-D-xylulose-5-phosphate synthase from Mycobacteroides abscessus (strain ATCC 19977 / DSM 44196 / CCUG 20993 / CIP 104536 / JCM 13569 / NCTC 13031 / TMC 1543 / L948) (Mycobacterium abscessus).